The sequence spans 462 residues: tRNA wybutosine-synthesizing protein 2 (462 aa).

S-adenosyl-L-methionine contacts are provided by residues S257, K264, and E305–L306.

The protein belongs to the class I-like SAM-binding methyltransferase superfamily. TRM5/TYW2 family.

Its subcellular location is the cytoplasm. The enzyme catalyses 4-demethylwyosine(37) in tRNA(Phe) + S-adenosyl-L-methionine = 4-demethyl-7-[(3S)-3-amino-3-carboxypropyl]wyosine(37) in tRNA(Phe) + S-methyl-5'-thioadenosine + H(+). It functions in the pathway tRNA modification; wybutosine-tRNA(Phe) biosynthesis. Functionally, S-adenosyl-L-methionine-dependent transferase that acts as a component of the wybutosine biosynthesis pathway. Wybutosine is a hyper modified guanosine with a tricyclic base found at the 3'-position adjacent to the anticodon of eukaryotic phenylalanine tRNA. Catalyzes the transfer of the alpha-amino-alpha-carboxypropyl (acp) group from S-adenosyl-L-methionine to the C-7 position of 4-demethylwyosine (imG-14) to produce wybutosine-86. This chain is tRNA wybutosine-synthesizing protein 2 (TRM12), found in Saccharomyces cerevisiae (strain ATCC 204508 / S288c) (Baker's yeast).